We begin with the raw amino-acid sequence, 357 residues long: uncharacterized protein (357 aa).

One copy of the HEAT repeat lies at 173–211; sequence VLPILEKLMQDESLYVRKSVANNLNDISKTHPHLLRKVA.

This is an uncharacterized protein from Bacillus subtilis (strain 168).